The sequence spans 31 residues: Ice-structuring glycoprotein 3 (31 aa).

O-linked (GalNAc...) threonine glycosylation is found at threonine 3, threonine 6, threonine 9, threonine 12, threonine 15, threonine 18, threonine 21, threonine 24, threonine 27, and threonine 30.

O-linked glycans consist of Gal-GalNAc disaccharides. The three proteins may differ only in the number of repeating units of -Ala-Ala-Thr-.

The protein resides in the secreted. Functionally, antifreeze proteins lower the blood freezing point. This fish lives in antarctic waters where it experiences water temperatures near -1.9 degrees Celsius. Its blood has a freezing point of about -2.0 degrees Celsius, and 30% of the freezing-point depression is due mainly to the 3 major high molecular weight glycoproteins in the plasma. In Pagothenia borchgrevinki (Bald rockcod), this protein is Ice-structuring glycoprotein 3.